We begin with the raw amino-acid sequence, 81 residues long: Small ribosomal subunit protein bS16 (81 aa).

Belongs to the bacterial ribosomal protein bS16 family.

This chain is Small ribosomal subunit protein bS16, found in Nautilia profundicola (strain ATCC BAA-1463 / DSM 18972 / AmH).